Consider the following 343-residue polypeptide: Phosphate acyltransferase (343 aa).

The protein belongs to the PlsX family. As to quaternary structure, homodimer. Probably interacts with PlsY.

The protein localises to the cytoplasm. The catalysed reaction is a fatty acyl-[ACP] + phosphate = an acyl phosphate + holo-[ACP]. The protein operates within lipid metabolism; phospholipid metabolism. Catalyzes the reversible formation of acyl-phosphate (acyl-PO(4)) from acyl-[acyl-carrier-protein] (acyl-ACP). This enzyme utilizes acyl-ACP as fatty acyl donor, but not acyl-CoA. The polypeptide is Phosphate acyltransferase (Neorickettsia sennetsu (strain ATCC VR-367 / Miyayama) (Ehrlichia sennetsu)).